The following is a 1356-amino-acid chain: Probable aldehyde oxidase 3 (1356 aa).

Residues 10–97 form the 2Fe-2S ferredoxin-type domain; sequence RAVVVAVNGE…HCAVTTSEGI (88 aa). [2Fe-2S] cluster contacts are provided by cysteine 49, cysteine 54, cysteine 57, and cysteine 79. Residues 245 to 437 form the FAD-binding PCMH-type domain; it reads VVVTGDGWFH…TFQTFRAAPR (193 aa). A disordered region spans residues 552–576; it reads NGSFTNGTANGIVDSSPEKHSNVDS.

It belongs to the xanthine dehydrogenase family. Aldehyde oxidases (AO) are homodimers and heterodimers of AO subunits. [2Fe-2S] cluster is required as a cofactor. It depends on FAD as a cofactor. The cofactor is Mo-molybdopterin.

The catalysed reaction is an aldehyde + O2 + H2O = a carboxylate + H2O2 + H(+). This Oryza sativa subsp. japonica (Rice) protein is Probable aldehyde oxidase 3.